The sequence spans 156 residues: MCHSRSCHPTMTILQAPTPAPSTIPGPRRGSGPEIFTFDPLPEPAAAPAGRPSASRGHRKRSRRVLYPRVVRRQLPVEEPNPAKRLLFLLLTIVFCQILMAEEGVPAPLPPEDAPNAASLAPTPVSAVLEPFNLTSEPSDYALDLSTFLQQHPAAF.

The interval 1-62 (MCHSRSCHPT…SASRGHRKRS (62 aa)) is disordered. The Cytoplasmic segment spans residues 1-82 (MCHSRSCHPT…RQLPVEEPNP (82 aa)). Thr-18 is subject to Phosphothreonine; by MAPK1. A Phosphoserine modification is found at Ser-31. Residues 44–55 (PAAAPAGRPSAS) show a composition bias toward low complexity. The helical; Signal-anchor for type II membrane protein transmembrane segment at 83-99 (AKRLLFLLLTIVFCQIL) threads the bilayer. The Extracellular portion of the chain corresponds to 100 to 156 (MAEEGVPAPLPPEDAPNAASLAPTPVSAVLEPFNLTSEPSDYALDLSTFLQQHPAAF). Position 123 is a phosphothreonine; by MAPK1 (Thr-123). Ser-126 is modified (phosphoserine; by MAPK1). Asn-133 carries an N-linked (GlcNAc...) asparagine glycan.

Belongs to the IER3 family. Interacts with the PPP2R5C-PP2A holoenzyme and ERK kinases; regulates ERK dephosphorylation. Post-translationally, phosphorylated at Thr-18, Thr-123 and Ser-126 by MAPK1/ERK2 and probably MAPK3/ERK1. Upon phosphorylation by MAPK1/ERK2 and MAPK3/ERK1, acquires the ability to inhibit cell death induced by various stimuli. Glycosylated.

The protein localises to the membrane. May play a role in the ERK signaling pathway by inhibiting the dephosphorylation of ERK by phosphatase PP2A-PPP2R5C holoenzyme. Also acts as an ERK downstream effector mediating survival. As a member of the NUPR1/RELB/IER3 survival pathway, may provide pancreatic ductal adenocarcinoma with remarkable resistance to cell stress, such as starvation or gemcitabine treatment. In Homo sapiens (Human), this protein is Radiation-inducible immediate-early gene IEX-1 (IER3).